Reading from the N-terminus, the 529-residue chain is Listeriolysin O (529 aa).

The first 24 residues, 1 to 24, serve as a signal peptide directing secretion; it reads MKKIMLVFITLILVSLPIAQQTEA. Transmembrane regions (beta stranded) follow at residues 214 to 227, 234 to 243, 312 to 321, and 329 to 341; these read ESQL…AFKA, VNFGAISEGK, STKVKAAFDA, and SGDV…IKNS. Positions 483–493 match the Conserved undecapeptide motif; that stretch reads ECTGLAWEWWR. The Cholesterol binding motif lies at 515 to 516; it reads TL.

It belongs to the cholesterol-dependent cytolysin family. In terms of assembly, homooligomeric pore complex of 35 to 50 subunits; when inserted in the host membrane.

Its subcellular location is the secreted. It is found in the host membrane. It localises to the host cell membrane. With respect to regulation, activity of listeriolysin O is regulated on multiple levels. It should be high in the phagosome, thereby allowing escape of the bacteria from the phagosomal compartment. Then, once inside the host cytosol, the activity must be controlled to prevent lysis of the host plasma membrane and loss of the intracellular environment. In terms of biological role, a cholesterol-dependent toxin that causes cytolysis by forming pores in cholesterol containing host membranes. After binding to target membranes, the protein undergoes a major conformation change, leading to its insertion in the host membrane and formation of an oligomeric pore complex. Cholesterol is required for binding to host membranes, membrane insertion and pore formation; cholesterol binding is mediated by a Thr-Leu pair in the C-terminus. Acts as a major virulence factor required for the escape of bacteria from phagosomal vacuoles and entry into the host cytosol. Can be reversibly inactivated by oxidation. This chain is Listeriolysin O (hly), found in Listeria monocytogenes serotype 4b (strain F2365).